The sequence spans 35 residues: U14-ctenitoxin-Pn1a (35 aa).

3 disulfide bridges follow: C3–C17, C10–C22, and C16–C32.

In terms of tissue distribution, expressed by the venom gland.

The protein resides in the secreted. In terms of biological role, neurotoxin. The chain is U14-ctenitoxin-Pn1a from Phoneutria nigriventer (Brazilian armed spider).